The chain runs to 646 residues: Wee1-like protein kinase (646 aa).

The interval 1-181 (MSFLSRQQPP…GTPPHKTFRK (181 aa)) is disordered. The segment covering 32–43 (DCEEEEEEEEEE) has biased composition (acidic residues). The residue at position 53 (Ser-53) is a Phosphoserine; by PLK1. A phosphoserine mark is found at Ser-78 and Ser-85. The span at 94–103 (LLPGACPGAD) shows a compositional bias: low complexity. Ser-123 bears the Phosphoserine; by CDK1 mark. Phosphoserine occurs at positions 127, 137, 139, 150, and 165. A compositionally biased stretch (basic and acidic residues) spans 158-170 (RAGEGRRSPRPDH). Phosphothreonine is present on residues Thr-187, Thr-190, and Thr-239. Phosphoserine occurs at positions 270, 307, and 312. Residues 299–569 (FHELEKIGSG…AMALVKHSVL (271 aa)) enclose the Protein kinase domain. ATP is bound by residues 305-313 (IGSGEFGSV) and Lys-328. Position 342 (Asn-342) interacts with Mg(2+). Asp-426 acts as the Proton acceptor in catalysis. Asn-431, Asp-463, and Gly-465 together coordinate Mg(2+). A Phosphoserine; by BRSK1 and BRSK2 modification is found at Ser-642.

This sequence belongs to the protein kinase superfamily. Ser/Thr protein kinase family. WEE1 subfamily. Mg(2+) is required as a cofactor. In terms of processing, phosphorylated during M and G1 phases. Also autophosphorylated. Phosphorylation at Ser-642 by BRSK1 and BRSK2 in post-mitotic neurons, leads to down-regulate WEE1 activity in polarized neurons. Phosphorylated at Ser-53 and Ser-123 by PLK1 and CDK1, respectively, generating an signal for degradation that can be recognized by the SCF(BTRC) complex, leading to its ubiquitination and degradation at the onset of G2/M phase. Post-translationally, dephosphorylated at Thr-239 by CTDP1. Dephosphorylated at Ser-53 and Ser-123 by the serine/threonine-protein phosphatase 2A preventing its ubiquitin-mediated degradation. Ubiquitinated and degraded at the onset of G2/M phase.

It localises to the nucleus. It catalyses the reaction L-tyrosyl-[protein] + ATP = O-phospho-L-tyrosyl-[protein] + ADP + H(+). With respect to regulation, synthesis is increased during S and G2 phases, presumably by an increase in transcription; activity is decreased by phosphorylation during M phase. Protein levels fall in M phase as a result of decreased synthesis combined with degradation. Activity seems to be negatively regulated by phosphorylation upon entry into mitosis, although N-terminal phosphorylation might also regulate the protein stability via protection from proteolysis or might regulate the subcellular location. In terms of biological role, acts as a negative regulator of entry into mitosis (G2 to M transition) by protecting the nucleus from cytoplasmically activated cyclin B1-complexed CDK1 before the onset of mitosis by mediating phosphorylation of CDK1 on 'Tyr-15'. Specifically phosphorylates and inactivates cyclin B1-complexed CDK1 reaching a maximum during G2 phase and a minimum as cells enter M phase. Phosphorylation of cyclin B1-CDK1 occurs exclusively on 'Tyr-15' and phosphorylation of monomeric CDK1 does not occur. Its activity increases during S and G2 phases and decreases at M phase when it is hyperphosphorylated. A correlated decrease in protein level occurs at M/G1 phase, probably due to its degradation. The chain is Wee1-like protein kinase from Homo sapiens (Human).